A 195-amino-acid chain; its full sequence is Matrix protein (195 aa).

The protein belongs to the novirhabdovirus matrix protein family. Homomultimer.

The protein localises to the virion. The protein resides in the host cytoplasm. In terms of biological role, the M protein has a crucial role in virus assembly and interacts with the RNP complex as well as with the viral membrane. The sequence is that of Matrix protein (M) from Salmo (IHNV).